The following is a 264-amino-acid chain: Thymidylate synthase (264 aa).

Residue Arg21 participates in dUMP binding. Position 51 (His51) interacts with (6R)-5,10-methylene-5,6,7,8-tetrahydrofolate. 126–127 is a dUMP binding site; sequence RR. Residue Cys146 is the Nucleophile of the active site. DUMP-binding positions include 166–169, Asn177, and 207–209; these read RSAD and HLY. Asp169 is a (6R)-5,10-methylene-5,6,7,8-tetrahydrofolate binding site. (6R)-5,10-methylene-5,6,7,8-tetrahydrofolate is bound at residue Ala263.

This sequence belongs to the thymidylate synthase family. Bacterial-type ThyA subfamily. As to quaternary structure, homodimer.

The protein localises to the cytoplasm. The enzyme catalyses dUMP + (6R)-5,10-methylene-5,6,7,8-tetrahydrofolate = 7,8-dihydrofolate + dTMP. The protein operates within pyrimidine metabolism; dTTP biosynthesis. Its function is as follows. Catalyzes the reductive methylation of 2'-deoxyuridine-5'-monophosphate (dUMP) to 2'-deoxythymidine-5'-monophosphate (dTMP) while utilizing 5,10-methylenetetrahydrofolate (mTHF) as the methyl donor and reductant in the reaction, yielding dihydrofolate (DHF) as a by-product. This enzymatic reaction provides an intracellular de novo source of dTMP, an essential precursor for DNA biosynthesis. This Alkalilimnicola ehrlichii (strain ATCC BAA-1101 / DSM 17681 / MLHE-1) protein is Thymidylate synthase.